Reading from the N-terminus, the 455-residue chain is GTPase Der (455 aa).

2 consecutive EngA-type G domains span residues 4–169 (PVVA…PPKD) and 178–353 (IQMS…EQHR). Residues 10-17 (GRPNVGKS), 57-61 (DTGGL), 120-123 (NKCE), 184-191 (GRPNVGKS), 231-235 (DTAGI), and 296-299 (NKWD) each bind GTP. The KH-like domain occupies 354-439 (RRVTTSVVNE…PLKLFWRGKQ (86 aa)).

Belongs to the TRAFAC class TrmE-Era-EngA-EngB-Septin-like GTPase superfamily. EngA (Der) GTPase family. Associates with the 50S ribosomal subunit.

GTPase that plays an essential role in the late steps of ribosome biogenesis. The sequence is that of GTPase Der from Synechococcus sp. (strain CC9902).